Consider the following 382-residue polypeptide: Chaperone protein DnaJ (382 aa).

The J domain maps to 5-70 (DYYEVLGVSR…DKKAAYDRYG (66 aa)). The CR-type zinc finger occupies 141–219 (GVQKTINVPA…CHGAGRVEKE (79 aa)). Zn(2+) contacts are provided by Cys-154, Cys-157, Cys-171, Cys-174, Cys-193, Cys-196, Cys-207, and Cys-210. 4 CXXCXGXG motif repeats span residues 154-161 (CDACKGTG), 171-178 (CPTCSGMG), 193-200 (CPTCNGMG), and 207-214 (CKVCHGAG).

The protein belongs to the DnaJ family. As to quaternary structure, homodimer. It depends on Zn(2+) as a cofactor.

It is found in the cytoplasm. Functionally, participates actively in the response to hyperosmotic and heat shock by preventing the aggregation of stress-denatured proteins and by disaggregating proteins, also in an autonomous, DnaK-independent fashion. Unfolded proteins bind initially to DnaJ; upon interaction with the DnaJ-bound protein, DnaK hydrolyzes its bound ATP, resulting in the formation of a stable complex. GrpE releases ADP from DnaK; ATP binding to DnaK triggers the release of the substrate protein, thus completing the reaction cycle. Several rounds of ATP-dependent interactions between DnaJ, DnaK and GrpE are required for fully efficient folding. Also involved, together with DnaK and GrpE, in the DNA replication of plasmids through activation of initiation proteins. This chain is Chaperone protein DnaJ, found in Cereibacter sphaeroides (strain ATCC 17029 / ATH 2.4.9) (Rhodobacter sphaeroides).